The following is a 252-amino-acid chain: MSEKLRRCRKELTAAIDRAFEGVRHSQECTAQQRLDAPSLTSQPVHRLLCRNPLAACPSAAPYSGASCAPESENPAFGTHHIPVNSKLQQPLYPKRKPLTSKENVLMQSSILARDRQFWRAAGDGEDWRKDSLRKDMERDLKADPNVLLSSSSQEVTKDLLDMIDHTSIRTIEELAGKLEFENELNRVCGHCQDSPFKEEAWALLVDESPQKALDADPGSLKQALDDQNIVETVLDLEEDYNLMTSFKYQIE.

Residues serine 195 and serine 209 each carry the phosphoserine modification.

As to expression, testis-specific. Highly expressed in spermatocytes (at protein level).

Functionally, essential for normal spermatogenesis and male fertility. This is an uncharacterized protein from Mus musculus (Mouse).